Consider the following 308-residue polypeptide: D-alanine--D-alanine ligase (308 aa).

The ATP-grasp domain occupies 103-302 (KFVFRAAGLP…YGELVSWMVE (200 aa)). 130–184 (MDPPYVIKPVSEGSSVGVFIVRAGDNRPPAELTSAEWNLGDEVMAERYIAGRELT) is an ATP binding site. Mg(2+) contacts are provided by aspartate 252, glutamate 269, and asparagine 271.

Belongs to the D-alanine--D-alanine ligase family. Requires Mg(2+) as cofactor. The cofactor is Mn(2+).

It is found in the cytoplasm. It catalyses the reaction 2 D-alanine + ATP = D-alanyl-D-alanine + ADP + phosphate + H(+). Its pathway is cell wall biogenesis; peptidoglycan biosynthesis. In terms of biological role, cell wall formation. This is D-alanine--D-alanine ligase from Parvibaculum lavamentivorans (strain DS-1 / DSM 13023 / NCIMB 13966).